A 270-amino-acid polypeptide reads, in one-letter code: Shikimate dehydrogenase (NADP(+)) (270 aa).

Residues 14 to 16 and threonine 61 each bind shikimate; that span reads SKS. Lysine 65 acts as the Proton acceptor in catalysis. Residues asparagine 86 and aspartate 101 each coordinate shikimate. NADP(+) is bound by residues 126–130, 150–155, and methionine 215; these read GAGGA and NRTVDK. Shikimate is bound at residue tyrosine 217. Glycine 238 serves as a coordination point for NADP(+).

The protein belongs to the shikimate dehydrogenase family. Homodimer.

It catalyses the reaction shikimate + NADP(+) = 3-dehydroshikimate + NADPH + H(+). It participates in metabolic intermediate biosynthesis; chorismate biosynthesis; chorismate from D-erythrose 4-phosphate and phosphoenolpyruvate: step 4/7. Involved in the biosynthesis of the chorismate, which leads to the biosynthesis of aromatic amino acids. Catalyzes the reversible NADPH linked reduction of 3-dehydroshikimate (DHSA) to yield shikimate (SA). The protein is Shikimate dehydrogenase (NADP(+)) of Methylobacillus flagellatus (strain ATCC 51484 / DSM 6875 / VKM B-1610 / KT).